The chain runs to 134 residues: Seminal plasma protein PDC-109 (134 aa).

A signal peptide spans 1–25 (MALQLGLFLIWAGVSVFLQLDPVNG). O-linked (GalNAc...) threonine glycosylation occurs at Thr-36. Fibronectin type-II domains lie at 44–88 (PEDE…YCAQ) and 89–134 (RDYA…WKYC). Disulfide bonds link Cys-49/Cys-73, Cys-63/Cys-86, Cys-94/Cys-119, and Cys-108/Cys-134.

It belongs to the seminal plasma protein family. Homodimer. O-linked glycan consists of Gal-GalNAc disaccharide which is modified with a sialic acid residue (macro- and/or microheterogeneity account for differences between BSP-A1 and BSP-A2). Major component of seminal plasma.

Its subcellular location is the secreted. In terms of biological role, could enhance the fertilizing capacity of bull spermatozoa upon interaction with heparin-like glycosaminoglycans present in the female genital tract. Exhibits both simulatory and inhibitory actions on the release of pituitary gonadotropins. The protein is Seminal plasma protein PDC-109 of Bos taurus (Bovine).